The chain runs to 339 residues: Diacylglycerol acyltransferase/mycolyltransferase Ag85A (339 aa).

Residues 1–43 (MKLVDRFRGAVTGMPRRLMVGAVGAALLSGLVGFVGGSATASA) form the signal peptide. 85 to 86 (MR) lines the substrate pocket. The segment at 101 to 111 (FEWYNQSGISV) is fibronectin-binding. A disulfide bridge connects residues cysteine 130 and cysteine 135. Residues serine 169 and aspartate 197 each coordinate substrate. Catalysis depends on serine 169, which acts as the Nucleophile. The active site involves glutamate 272. Substrate is bound by residues 274-277 (FVRT), lysine 281, and 304-306 (HDW). The active site involves histidine 304.

Belongs to the mycobacterial A85 antigen family. Homodimer.

It localises to the secreted. The protein localises to the cell wall. It is found in the cytoplasm. It catalyses the reaction an acyl-CoA + a 1,2-diacyl-sn-glycerol = a triacyl-sn-glycerol + CoA. The enzyme catalyses 2 alpha,alpha'-trehalose 6-mycolate = alpha,alpha'-trehalose 6,6'-bismycolate + alpha,alpha-trehalose. Its function is as follows. The antigen 85 proteins (FbpA, FbpB, FbpC) are responsible for the high affinity of mycobacteria for fibronectin, a large adhesive glycoprotein, which facilitates the attachment of M.tuberculosis to murine alveolar macrophages (AMs). They also help to maintain the integrity of the cell wall by catalyzing the transfer of mycolic acids to cell wall arabinogalactan, and through the synthesis of alpha,alpha-trehalose dimycolate (TDM, cord factor). They catalyze the transfer of a mycoloyl residue from one molecule of alpha,alpha-trehalose monomycolate (TMM) to another TMM, leading to the formation of TDM. FbpA mediates triacylglycerol (TAG) formation with long-chain acyl-CoA as the acyl donor and 1,2-dipalmitoyl-sn-glycerol (1,2-dipalmitin) as the acyl acceptor. It has a preference for C26:0-CoA over C18:1-CoA. The protein is Diacylglycerol acyltransferase/mycolyltransferase Ag85A (fbpA) of Mycobacterium gordonae.